The chain runs to 367 residues: Peptide chain release factor 2 (367 aa).

At glutamine 254 the chain carries N5-methylglutamine.

This sequence belongs to the prokaryotic/mitochondrial release factor family. Methylated by PrmC. Methylation increases the termination efficiency of RF2.

The protein resides in the cytoplasm. Peptide chain release factor 2 directs the termination of translation in response to the peptide chain termination codons UGA and UAA. The protein is Peptide chain release factor 2 of Aromatoleum aromaticum (strain DSM 19018 / LMG 30748 / EbN1) (Azoarcus sp. (strain EbN1)).